A 178-amino-acid polypeptide reads, in one-letter code: Caveolin-1 (178 aa).

S2 is modified (N-acetylserine). S2 bears the Phosphoserine mark. Residues 2–94 (SGGKYVDSEG…WKASFTTFTV (93 aa)) are required for homooligomerization. Over 2-104 (SGGKYVDSEG…TKYWFYRLLS (103 aa)) the chain is Cytoplasmic. At K5 the chain carries N6-acetyllysine; alternate. A Glycyl lysine isopeptide (Lys-Gly) (interchain with G-Cter in ubiquitin); alternate cross-link involves residue K5. Y6 carries the post-translational modification Phosphotyrosine. A Phosphoserine modification is found at S9. At Y14 the chain carries Phosphotyrosine; by ABL1. The residue at position 25 (Y25) is a Phosphotyrosine. Glycyl lysine isopeptide (Lys-Gly) (interchain with G-Cter in ubiquitin) cross-links involve residues K26, K30, K39, K47, and K57. The tract at residues 82–94 (DGIWKASFTTFTV) is interaction with CAVIN3. The helical intramembrane region spans 105 to 125 (SLVGIPVALIWGIYFAILSFL). The Cytoplasmic segment spans residues 126 to 178 (YIWAVVPCIKSFLIKIQCISRIYSICIHTFCDPLYEAIGKIFSNIRISMQKEI). The segment at 131-142 (VPCIKSFLIKIQ) is interacts with SPRY1, SPRY2, SPRY3 and SPRY4. Residues C133, C143, and C156 are each lipidated (S-palmitoyl cysteine). The tract at residues 149-160 (SICIHTFCDPLY) is interacts with SPRY1, SPRY2, and SPRY4. The interacts with SPRY1, SPRY2, SPRY3 and SPRY4 stretch occupies residues 167 to 178 (FSNIRISMQKEI).

This sequence belongs to the caveolin family. Homooligomer. Interacts with GLIPR2. Interacts with NOSTRIN. Interacts with SNAP25 and STX1A. Interacts (via the N-terminus) with DPP4; the interaction is direct. Interacts with CTNNB1, CDH1 and JUP. Interacts with PACSIN2; this interaction induces membrane tubulation. Interacts with SLC7A9. Interacts with BMX and BTK. Interacts with TGFBR1. Interacts with CAVIN3 (via leucine-zipper domain) in a cholesterol-sensitive manner. Interacts with CAVIN1. Interacts with EHD2 in a cholesterol-dependent manner. Forms a ternary complex with UBXN6 and VCP; mediates CAV1 targeting to lysosomes for degradation. Interacts with ABCG1; this interaction regulates ABCG1-mediated cholesterol efflux. Interacts with NEU3; this interaction enhances NEU3 sialidase activity within caveola. Interacts (via C-terminus) with SPRY1, SPRY2 (via C-terminus), SPRY3, and SPRY4. Interacts with IGFBP5; this interaction allows trafficking of IGFBP5 from the plasma membrane to the nucleus. Phosphorylated at Tyr-14 by ABL1 in response to oxidative stress. In terms of processing, ubiquitinated. Undergo monoubiquitination and multi- and/or polyubiquitination. Monoubiquitination of N-terminal lysines promotes integration in a ternary complex with UBXN6 and VCP which promotes oligomeric CAV1 targeting to lysosomes for degradation. Ubiquitinated by ZNRF1; leading to degradation and modulation of the TLR4-mediated immune response.

It is found in the golgi apparatus membrane. It localises to the cell membrane. The protein localises to the membrane. Its subcellular location is the caveola. The protein resides in the membrane raft. May act as a scaffolding protein within caveolar membranes. Forms a stable heterooligomeric complex with CAV2 that targets to lipid rafts and drives caveolae formation. Mediates the recruitment of CAVIN proteins (CAVIN1/2/3/4) to the caveolae. Interacts directly with G-protein alpha subunits and can functionally regulate their activity. Involved in the costimulatory signal essential for T-cell receptor (TCR)-mediated T-cell activation. Its binding to DPP4 induces T-cell proliferation and NF-kappa-B activation in a T-cell receptor/CD3-dependent manner. Recruits CTNNB1 to caveolar membranes and may regulate CTNNB1-mediated signaling through the Wnt pathway. Negatively regulates TGFB1-mediated activation of SMAD2/3 by mediating the internalization of TGFBR1 from membrane rafts leading to its subsequent degradation. Binds 20(S)-hydroxycholesterol (20(S)-OHC). In Atelerix albiventris (Middle-African hedgehog), this protein is Caveolin-1 (CAV1).